The primary structure comprises 48 residues: Large ribosomal subunit protein bL32c (48 aa).

The protein belongs to the bacterial ribosomal protein bL32 family.

It is found in the plastid. The protein resides in the chloroplast. This chain is Large ribosomal subunit protein bL32c (rpl32), found in Vicia faba (Broad bean).